The chain runs to 127 residues: Small ribosomal subunit protein uS11 (127 aa).

The protein belongs to the universal ribosomal protein uS11 family. Part of the 30S ribosomal subunit. Interacts with proteins S7 and S18. Binds to IF-3.

In terms of biological role, located on the platform of the 30S subunit, it bridges several disparate RNA helices of the 16S rRNA. Forms part of the Shine-Dalgarno cleft in the 70S ribosome. In Chlorobium limicola (strain DSM 245 / NBRC 103803 / 6330), this protein is Small ribosomal subunit protein uS11.